Reading from the N-terminus, the 329-residue chain is G-protein coupled bile acid receptor 1 (329 aa).

The Extracellular portion of the chain corresponds to 1-19 (MTSNSTREVPSPVPAGALG). Asparagine 4 is a glycosylation site (N-linked (GlcNAc...) asparagine). Residues 20-40 (LSLALASLIVAANLLLAVGIA) traverse the membrane as a helical segment. Residues 41-52 (GDRRLRSPPAGC) lie on the Cytoplasmic side of the membrane. The chain crosses the membrane as a helical span at residues 53–73 (FFLSLLLAGLLTGLALPALPV). Topologically, residues 74–85 (LWSQSRRGYWSC) are extracellular. Residues cysteine 85 and cysteine 155 are joined by a disulfide bond. Residues 86–106 (LFLYLAPNFCFLSLLANLLLV) form a helical membrane-spanning segment. Over 107-125 (HGERYMAVLRPLRPRGSMR) the chain is Cytoplasmic. The chain crosses the membrane as a helical span at residues 126 to 146 (LALLLTWAAPLLFASLPALGW). At 147 to 165 (NHWAPGGNCSSQAVFPAPY) the chain is on the extracellular side. An N-linked (GlcNAc...) asparagine glycan is attached at asparagine 154. The chain crosses the membrane as a helical span at residues 166 to 186 (LYLEIYGLLLPAVGAAALLSV). Over 187-230 (RVLVTAHRQLQDIRRLERAVCRGAPSALARALTWRQARAQAGAT) the chain is Cytoplasmic. Residues 231–251 (LLFGLCWGPYVATLLLSVLAF) form a helical membrane-spanning segment. Residues 252-261 (EQRPPLGPGT) lie on the Extracellular side of the membrane. The chain crosses the membrane as a helical span at residues 262–282 (LLSLISLGSASAAAVPVAMGL). Residues 283–329 (GDQRYTGPWRVAAQKWLRMLRGRPQSSPGPSTAYHTSSQSSVDLDLN) are Cytoplasmic-facing. Positions 304 to 329 (GRPQSSPGPSTAYHTSSQSSVDLDLN) are disordered. Polar residues predominate over residues 306–329 (PQSSPGPSTAYHTSSQSSVDLDLN).

This sequence belongs to the G-protein coupled receptor 1 family.

It localises to the cell membrane. In terms of biological role, receptor for bile acid. Bile acid-binding induces its internalization, activation of extracellular signal-regulated kinase and intracellular cAMP production. May be involved in the suppression of macrophage functions by bile acids. Involved in bile acid promoted GLP1R secretion. The sequence is that of G-protein coupled bile acid receptor 1 (GPBAR1) from Bos taurus (Bovine).